The chain runs to 505 residues: Lysine--tRNA ligase (505 aa).

Residues glutamate 415 and glutamate 422 each coordinate Mg(2+).

Belongs to the class-II aminoacyl-tRNA synthetase family. In terms of assembly, homodimer. Mg(2+) serves as cofactor.

It is found in the cytoplasm. The catalysed reaction is tRNA(Lys) + L-lysine + ATP = L-lysyl-tRNA(Lys) + AMP + diphosphate. In Cronobacter sakazakii (strain ATCC BAA-894) (Enterobacter sakazakii), this protein is Lysine--tRNA ligase.